A 428-amino-acid chain; its full sequence is 3-phosphoshikimate 1-carboxyvinyltransferase (428 aa).

Positions 22, 23, and 27 each coordinate 3-phosphoshikimate. A phosphoenolpyruvate-binding site is contributed by Lys22. Gly96 and Arg124 together coordinate phosphoenolpyruvate. 3-phosphoshikimate is bound by residues Ser171, Ser172, Gln173, Ser198, Asp311, and Lys338. Gln173 is a binding site for phosphoenolpyruvate. The active-site Proton acceptor is the Asp311. Residues Arg342 and Arg383 each contribute to the phosphoenolpyruvate site.

Belongs to the EPSP synthase family. As to quaternary structure, monomer.

It localises to the cytoplasm. The catalysed reaction is 3-phosphoshikimate + phosphoenolpyruvate = 5-O-(1-carboxyvinyl)-3-phosphoshikimate + phosphate. It participates in metabolic intermediate biosynthesis; chorismate biosynthesis. Its function is as follows. Catalyzes the transfer of the enolpyruvyl moiety of phosphoenolpyruvate (PEP) to the 5-hydroxyl of shikimate-3-phosphate (S3P) to produce enolpyruvyl shikimate-3-phosphate and inorganic phosphate. The chain is 3-phosphoshikimate 1-carboxyvinyltransferase from Methanopyrus kandleri (strain AV19 / DSM 6324 / JCM 9639 / NBRC 100938).